Here is an 87-residue protein sequence, read N- to C-terminus: Acyl carrier protein TtuC (87 aa).

In terms of domain architecture, Carrier spans 11–87; it reads ITAEDVQQWL…HALSQFIAAK (77 aa). An O-(pantetheine 4'-phosphoryl)serine modification is found at serine 48.

It depends on pantetheine 4'-phosphate as a cofactor.

Functionally, carrier protein likely involved in the biosynthesis of a polyyne metabolite. Accepts as substrate the activated form of decanoic acid from TtuA. The polypeptide is Acyl carrier protein TtuC (Teredinibacter turnerae (strain ATCC 39867 / T7901)).